Here is a 261-residue protein sequence, read N- to C-terminus: Serine acetyltransferase (261 aa).

Belongs to the transferase hexapeptide repeat family.

Its subcellular location is the cytoplasm. The enzyme catalyses L-serine + acetyl-CoA = O-acetyl-L-serine + CoA. Its pathway is amino-acid biosynthesis; L-cysteine biosynthesis; L-cysteine from L-serine: step 1/2. This Buchnera aphidicola subsp. Schizaphis graminum (strain Sg) protein is Serine acetyltransferase (cysE).